Here is a 210-residue protein sequence, read N- to C-terminus: Urease accessory protein UreF (210 aa).

The protein belongs to the UreF family. UreD, UreF and UreG form a complex that acts as a GTP-hydrolysis-dependent molecular chaperone, activating the urease apoprotein by helping to assemble the nickel containing metallocenter of UreC. The UreE protein probably delivers the nickel.

Its subcellular location is the cytoplasm. Its function is as follows. Required for maturation of urease via the functional incorporation of the urease nickel metallocenter. The polypeptide is Urease accessory protein UreF (Cereibacter sphaeroides (strain ATCC 17023 / DSM 158 / JCM 6121 / CCUG 31486 / LMG 2827 / NBRC 12203 / NCIMB 8253 / ATH 2.4.1.) (Rhodobacter sphaeroides)).